A 316-amino-acid chain; its full sequence is uncharacterized protein (316 aa).

Residues 1–70 lie on the Cytoplasmic side of the membrane; that stretch reads SFAYSGNSES…NNDEIGIWNY (70 aa). Residues 71 to 91 traverse the membrane as a helical segment; the sequence is ISVAEMGGVLLFLSYWIWTCL. Residue H92 is a topological domain, lumenal. The helical transmembrane segment at 93–113 threads the bilayer; the sequence is FSKIIFPAQKVICLYIFLFAL. Over 114-170 the chain is Cytoplasmic; sequence NQTLQECIEEYVFSSECIKYRQFYSVYEIIDFLRTNFYRLFVIYCALGFGITRTVPK. A helical transmembrane segment spans residues 171 to 191; sequence YLMIKGISIVIALCSVYWISL. Residues 192-194 lie on the Lumenal side of the membrane; the sequence is YKD. Residues 195–215 form a helical membrane-spanning segment; the sequence is VYVVSEIFDMIQYEVSPAIWV. Residues 216–245 are Cytoplasmic-facing; that stretch reads YSICHLLKQCTSVTTYENASKARFFRRMLN. Residues 246-266 form a helical membrane-spanning segment; that stretch reads AFIFIFCASPMLHYLSNIIFG. Residues 267 to 316 are Lumenal-facing; that stretch reads NFDYRLSVIIGDLFTFMEKIAFPCYIMFPTHNEALAYNRNVAEEAQEKMI.

This sequence belongs to the UPF0742 family.

It localises to the endoplasmic reticulum. The protein localises to the membrane. This is an uncharacterized protein from Schizosaccharomyces pombe (strain 972 / ATCC 24843) (Fission yeast).